Here is a 440-residue protein sequence, read N- to C-terminus: Heat stress transcription factor A-4b (440 aa).

A coiled-coil region spans residues 121 to 181 (NERKDYEEEI…QRSLISYVRE (61 aa)). The interval 133–183 (LKSDNAALSSELQNNTLKKLNMEKRMQALEEKLFVVEDQQRSLISYVREIV) is hydrophobic repeat HR-A/B. Residues 158 to 163 (MQALEE) carry the Nuclear export signal motif. Positions 200–204 (RKKRR) match the Nuclear localization signal motif. The segment at 264–417 (DISYDDGVPG…EMKSGDRQHL (154 aa)) is disordered. Residues 295-305 (SPPTRMRTSSA) show a composition bias toward polar residues. Over residues 333-343 (SRVDTRAKVSE) the composition is skewed to basic and acidic residues. The AHA signature appears at 375 to 384 (DGFWQQFLTE). Residues 380 to 390 (QFLTEQPGSSD) are compositionally biased toward polar residues. Over residues 391 to 417 (AHQEAQSERRDGGNKVDEMKSGDRQHL) the composition is skewed to basic and acidic residues.

The protein belongs to the HSF family. Class A subfamily. Homotrimer. Post-translationally, exhibits temperature-dependent phosphorylation.

It localises to the cytoplasm. Its subcellular location is the nucleus. Its function is as follows. Transcriptional regulator that specifically binds DNA of heat shock promoter elements (HSE). In Oryza sativa subsp. japonica (Rice), this protein is Heat stress transcription factor A-4b (HSFA4B).